The sequence spans 489 residues: Netrin-5 (489 aa).

Positions 1–16 (MPVTFALLLLLGQATA) are cleaved as a signal peptide. An N-linked (GlcNAc...) asparagine glycan is attached at Asn62. Intrachain disulfides connect Cys157–Cys166, Cys159–Cys175, Cys177–Cys186, Cys189–Cys209, Cys212–Cys221, Cys214–Cys239, Cys242–Cys251, Cys254–Cys272, Cys275–Cys287, Cys277–Cys294, Cys296–Cys305, Cys308–Cys322, Cys345–Cys418, Cys349–Cys420, and Cys364–Cys475. 3 Laminin EGF-like domains span residues 157–211 (CQCH…PCLP), 212–274 (CSCN…ACRA), and 275–324 (CQCH…PCQR). Residues 345–475 (CQNYCNMSDT…LQQEERAGGC (131 aa)) form the NTR domain. Residues 470 to 489 (ERAGGCRGVRAPTPSPRPEH) are disordered.

The protein localises to the secreted. Functionally, plays a role in neurogenesis. Prevents motor neuron cell body migration out of the neural tube. This Homo sapiens (Human) protein is Netrin-5 (NTN5).